The following is a 283-amino-acid chain: Hydrogenase expression/formation protein HoxQ (283 aa).

The interval 1 to 29 is disordered; that stretch reads MNDDLPILPPGFGPGSHGEEERPDCPSMP.

It belongs to the HupH/HyaF family.

The protein is Hydrogenase expression/formation protein HoxQ (hoxQ) of Azotobacter vinelandii.